A 173-amino-acid polypeptide reads, in one-letter code: Alpha-crystallin A chain (173 aa).

Residue methionine 1 is modified to N-acetylmethionine. The tract at residues 1-63 (MDVTIQHPWF…RTVLDSGVSE (63 aa)) is required for complex formation with BFSP1 and BFSP2. The residue at position 6 (glutamine 6) is a Deamidated glutamine; partial. Position 45 is a phosphoserine (serine 45). Glutamine 50 is subject to Deamidated glutamine; partial. The sHSP domain occupies 52-162 (LFRTVLDSGV…GHSERAIPVS (111 aa)). Lysine 70 is modified (N6-acetyllysine). Glutamine 90 bears the Deamidated glutamine; partial mark. Position 99 is an N6-acetyllysine (lysine 99). Position 100 (histidine 100) interacts with Zn(2+). The residue at position 101 (asparagine 101) is a Deamidated asparagine; partial. Zn(2+) is bound by residues glutamate 102 and histidine 107. A Phosphoserine modification is found at serine 122. Asparagine 123 is modified (deamidated asparagine; partial). Residues 144-173 (PKVQSGLDAGHSERAIPVSREEKPSSAPSS) are disordered. Glutamine 147 carries the deamidated glutamine; partial modification. The segment covering 153-167 (GHSERAIPVSREEKP) has biased composition (basic and acidic residues). Zn(2+) is bound at residue histidine 154. A glycan (O-linked (GlcNAc) serine) is linked at serine 162.

It belongs to the small heat shock protein (HSP20) family. In terms of assembly, heteromer composed of three CRYAA and one CRYAB subunits. Inter-subunit bridging via zinc ions enhances stability, which is crucial as there is no protein turn over in the lens. Can also form homodimers and homotetramers (dimers of dimers) which serve as the building blocks of homooligomers. Within homooligomers, the zinc-binding motif is created from residues of 3 different molecules. His-100 and Glu-102 from one molecule are ligands of the zinc ion, and His-107 and His-154 residues from additional molecules complete the site with tetrahedral coordination geometry. Part of a complex required for lens intermediate filament formation composed of BFSP1, BFSP2 and CRYAA. Post-translationally, acetylation at Lys-70 may increase chaperone activity. Undergoes age-dependent proteolytical cleavage at the C-terminus.

The protein localises to the cytoplasm. It localises to the nucleus. Functionally, contributes to the transparency and refractive index of the lens. Acts as a chaperone, preventing aggregation of various proteins under a wide range of stress conditions. Required for the correct formation of lens intermediate filaments as part of a complex composed of BFSP1, BFSP2 and CRYAA. This is Alpha-crystallin A chain (CRYAA) from Otolemur crassicaudatus (Brown greater galago).